Here is an 881-residue protein sequence, read N- to C-terminus: Alanine--tRNA ligase (881 aa).

Residues His-566, His-570, Cys-668, and His-672 each contribute to the Zn(2+) site.

The protein belongs to the class-II aminoacyl-tRNA synthetase family. Requires Zn(2+) as cofactor.

The protein resides in the cytoplasm. The catalysed reaction is tRNA(Ala) + L-alanine + ATP = L-alanyl-tRNA(Ala) + AMP + diphosphate. Its function is as follows. Catalyzes the attachment of alanine to tRNA(Ala) in a two-step reaction: alanine is first activated by ATP to form Ala-AMP and then transferred to the acceptor end of tRNA(Ala). Also edits incorrectly charged Ser-tRNA(Ala) and Gly-tRNA(Ala) via its editing domain. The sequence is that of Alanine--tRNA ligase from Frankia alni (strain DSM 45986 / CECT 9034 / ACN14a).